A 407-amino-acid chain; its full sequence is Negative RAS protein regulator protein (407 aa).

3 disordered regions span residues 51-94, 165-187, and 241-273; these read PRII…ARQI, HPSK…NLNF, and NNNN…NVFS. Over residues 55–73 the composition is skewed to low complexity; the sequence is SSSNSNSNSNSNSNSNSNS. A Myb-like domain is found at 90 to 158; sequence SARQIRKKWK…QCHDRFKVLY (69 aa). The span at 165–177 shows a compositional bias: basic residues; sequence HPSKKSKQKKKKS. The span at 241–270 shows a compositional bias: low complexity; sequence NNNNNNINNSNNSNNNNSNNINRNSNHSTN.

It localises to the nucleus. Functionally, negative regulator of the Ras-cyclic AMP pathway. Negatively regulate the activity of normal but not mutationally activated Ras proteins. The down-regulatory effect of RPI1 requires the presence of one of the two Ras GTPase activators, IRA1 and IRA2. This is Negative RAS protein regulator protein (RPI1) from Saccharomyces cerevisiae (strain ATCC 204508 / S288c) (Baker's yeast).